A 384-amino-acid chain; its full sequence is 4-hydroxy-3-methylbut-2-en-1-yl diphosphate synthase (flavodoxin) (384 aa).

The [4Fe-4S] cluster site is built by Cys280, Cys283, Cys315, and Glu322.

It belongs to the IspG family. The cofactor is [4Fe-4S] cluster.

It carries out the reaction (2E)-4-hydroxy-3-methylbut-2-enyl diphosphate + oxidized [flavodoxin] + H2O + 2 H(+) = 2-C-methyl-D-erythritol 2,4-cyclic diphosphate + reduced [flavodoxin]. It functions in the pathway isoprenoid biosynthesis; isopentenyl diphosphate biosynthesis via DXP pathway; isopentenyl diphosphate from 1-deoxy-D-xylulose 5-phosphate: step 5/6. Its function is as follows. Converts 2C-methyl-D-erythritol 2,4-cyclodiphosphate (ME-2,4cPP) into 1-hydroxy-2-methyl-2-(E)-butenyl 4-diphosphate. In Parafrankia sp. (strain EAN1pec), this protein is 4-hydroxy-3-methylbut-2-en-1-yl diphosphate synthase (flavodoxin).